The following is a 263-amino-acid chain: Glutamate racemase (263 aa).

Substrate contacts are provided by residues 12 to 13 (DS) and 44 to 45 (YG). The active-site Proton donor/acceptor is Cys75. 76 to 77 (NT) serves as a coordination point for substrate. Cys186 (proton donor/acceptor) is an active-site residue. Residue 187-188 (TH) coordinates substrate.

This sequence belongs to the aspartate/glutamate racemases family.

The catalysed reaction is L-glutamate = D-glutamate. The protein operates within cell wall biogenesis; peptidoglycan biosynthesis. Its function is as follows. Provides the (R)-glutamate required for cell wall biosynthesis. This Ectopseudomonas mendocina (strain ymp) (Pseudomonas mendocina) protein is Glutamate racemase.